The chain runs to 267 residues: 4-hydroxy-tetrahydrodipicolinate reductase (267 aa).

NAD(+)-binding positions include 9–14 and Asp-35; that span reads GASGRM. Residue Arg-36 participates in NADP(+) binding. Residues 98 to 100 and 122 to 125 contribute to the NAD(+) site; these read GTT and ASNF. His-155 (proton donor/acceptor) is an active-site residue. His-156 lines the (S)-2,3,4,5-tetrahydrodipicolinate pocket. Residue Lys-159 is the Proton donor of the active site. Residue 165 to 166 coordinates (S)-2,3,4,5-tetrahydrodipicolinate; that stretch reads GT.

It belongs to the DapB family.

It localises to the cytoplasm. The catalysed reaction is (S)-2,3,4,5-tetrahydrodipicolinate + NAD(+) + H2O = (2S,4S)-4-hydroxy-2,3,4,5-tetrahydrodipicolinate + NADH + H(+). The enzyme catalyses (S)-2,3,4,5-tetrahydrodipicolinate + NADP(+) + H2O = (2S,4S)-4-hydroxy-2,3,4,5-tetrahydrodipicolinate + NADPH + H(+). Its pathway is amino-acid biosynthesis; L-lysine biosynthesis via DAP pathway; (S)-tetrahydrodipicolinate from L-aspartate: step 4/4. Its function is as follows. Catalyzes the conversion of 4-hydroxy-tetrahydrodipicolinate (HTPA) to tetrahydrodipicolinate. In Chromobacterium violaceum (strain ATCC 12472 / DSM 30191 / JCM 1249 / CCUG 213 / NBRC 12614 / NCIMB 9131 / NCTC 9757 / MK), this protein is 4-hydroxy-tetrahydrodipicolinate reductase.